Consider the following 494-residue polypeptide: UPF0371 protein SPCG_0344 (494 aa).

The protein belongs to the UPF0371 family.

The protein is UPF0371 protein SPCG_0344 of Streptococcus pneumoniae (strain CGSP14).